Reading from the N-terminus, the 1197-residue chain is Neural cell adhesion molecule L1.1 (1197 aa).

Ig-like C2-type domains are found at residues 1–58, 69–160, 165–263, 268–355, and 360–442; these read EFRQ…TAVS, PSLA…EPMS, PSNS…YTVT, PYWT…THVH, and PAQI…KSIS. Topologically, residues 1–1054 are extracellular; it reads EFRQRDPSPS…SPRNFATEGW (1054 aa). The cysteines at positions 92 and 143 are disulfide-linked. 8 N-linked (GlcNAc...) asparagine glycosylation sites follow: Asn135, Asn149, Asn221, Asn298, Asn414, Asn421, Asn438, and Asn449. Disulfide bonds link Cys199–Cys247, Cys289–Cys339, and Cys383–Cys432. Positions 451-541 constitute an Ig-like C2-type 6 domain; that stretch reads TKIVGPPQNL…DSDTASGYIT (91 aa). Cys472 and Cys525 form a disulfide bridge. 5 consecutive Fibronectin type-III domains span residues 548–643, 645–742, 747–852, 853–952, and 953–1048; these read PPQS…TPAA, PDTN…SGED, APSA…TPEG, APGP…LLDG, and EPPS…SPRN. Residues 630–640 are compositionally biased toward polar residues; that stretch reads APTESSLSYST. Positions 630–655 are disordered; that stretch reads APTESSLSYSTPAAKPDTNPENVMTL. The N-linked (GlcNAc...) asparagine glycan is linked to Asn708. Residues Asn959, Asn968, Asn1002, and Asn1027 are each glycosylated (N-linked (GlcNAc...) asparagine). A helical transmembrane segment spans residues 1055–1075; sequence FIGLISALVLLLLVLLLLCYI. The Cytoplasmic portion of the chain corresponds to 1076 to 1197; the sequence is KKSKGGKYSV…TSVTGILGPN (122 aa). Disordered stretches follow at residues 1115-1135 and 1154-1197; these read MEKCSISQPSGCESKRSSNDS and IGQY…LGPN.

Belongs to the immunoglobulin superfamily. L1/neurofascin/NgCAM family. In terms of tissue distribution, expressed in postmitotic neurons in 16-36 hours embryos, including those in the brain, cranial ganglia and otic and olfactory placodes, and in all classes of spinal neurons.

Its subcellular location is the cell membrane. It localises to the cell projection. The protein localises to the growth cone. In terms of biological role, cell adhesion molecule with an important role in the development of the nervous system. Involved in neuron-neuron adhesion, neurite fasciculation, outgrowth of neurites, etc. Binds to axonin on neurons. The sequence is that of Neural cell adhesion molecule L1.1 (nadl1.1) from Danio rerio (Zebrafish).